A 2570-amino-acid polypeptide reads, in one-letter code: Stabilin-1 (2570 aa).

A signal peptide spans 1–25; that stretch reads MAGPRGLLPLCLLAFCLAGFSFVRG. The Extracellular segment spans residues 26 to 2478; that stretch reads QVLFKGCDVK…LAPEAPPVAA (2453 aa). EGF-like domains are found at residues 110-148, 156-193, 195-229, and 232-271; these read HECP…SACQ, FGPD…PHCD, ELPV…QGSE, and APNP…MVCL. Cystine bridges form between Cys-112/Cys-126, Cys-120/Cys-136, Cys-138/Cys-147, Cys-160/Cys-171, Cys-164/Cys-181, Cys-183/Cys-192, Cys-199/Cys-210, Cys-204/Cys-217, Cys-236/Cys-247, Cys-241/Cys-257, and Cys-259/Cys-270. N-linked (GlcNAc...) asparagine glycosylation is present at Asn-133. N-linked (GlcNAc...) asparagine glycosylation is found at Asn-286, Asn-312, Asn-413, Asn-606, Asn-673, Asn-712, and Asn-745. 2 FAS1 domains span residues 356–494 and 506–641; these read YGHL…TGLR and KRTI…DGIL. The EGF-like 5 domain maps to 728–768; it reads DCTQCPGGFSNPCYGKGNCSDGIQGNGACLCFPDYKGIACH. 3 cysteine pairs are disulfide-bonded: Cys-732/Cys-746, Cys-740/Cys-756, and Cys-758/Cys-767. Asn-816 is a glycosylation site (N-linked (GlcNAc...) asparagine). EGF-like domains are found at residues 818–858, 861–903, 904–946, and 947–986; these read SMGD…DGFS, PSNP…RVCV, AIDE…YQCS, and PIDP…DGFS. Disulfide bonds link Cys-822/Cys-837, Cys-831/Cys-846, Cys-865/Cys-879, Cys-873/Cys-889, Cys-891/Cys-902, Cys-908/Cys-922, Cys-916/Cys-932, Cys-934/Cys-945, Cys-951/Cys-964, and Cys-958/Cys-974. FAS1 domains lie at 988–1118 and 1128–1253; these read YGDI…SQVL and GQGL…SGVL. Asn-1087, Asn-1096, Asn-1170, Asn-1178, Asn-1222, and Asn-1274 each carry an N-linked (GlcNAc...) asparagine glycan. Residues 1327-1392 enclose the Laminin EGF-like 1 domain; it reads TLCEPCPGGL…CDCAHGLCQE (66 aa). Disulfide bonds link Cys-1332–Cys-1346, Cys-1340–Cys-1356, and Cys-1358–Cys-1367. Asn-1378 carries an N-linked (GlcNAc...) asparagine glycan. 15 disulfides stabilise this stretch: Cys-1379–Cys-1390, Cys-1383–Cys-1400, Cys-1402–Cys-1411, Cys-1420–Cys-1430, Cys-1424–Cys-1440, Cys-1442–Cys-1453, Cys-1459–Cys-1472, Cys-1466–Cys-1482, Cys-1484–Cys-1495, Cys-1501–Cys-1514, Cys-1508–Cys-1524, Cys-1526–Cys-1538, Cys-1544–Cys-1557, Cys-1551–Cys-1567, and Cys-1569–Cys-1581. 4 EGF-like domains span residues 1416-1454, 1455-1496, 1497-1539, and 1540-1582; these read TSPQ…IFCS, EVDP…ELCQ, EINS…RTCE, and LLDP…LTCR. N-linked (GlcNAc...) asparagine glycosylation is present at Asn-1471. FAS1 domains lie at 1582 to 1708 and 1724 to 1864; these read RARV…DRVL and PRRN…DQLL. Residues Asn-1626 and Asn-1727 are each glycosylated (N-linked (GlcNAc...) asparagine). A Laminin EGF-like 2 domain is found at 1966–2031; that stretch reads SECQACPGGP…RCTVHGRCDE (66 aa). 15 disulfide bridges follow: Cys-1971/Cys-1985, Cys-1979/Cys-1995, Cys-1997/Cys-2006, Cys-2018/Cys-2029, Cys-2023/Cys-2039, Cys-2041/Cys-2050, Cys-2060/Cys-2070, Cys-2064/Cys-2076, Cys-2078/Cys-2089, Cys-2095/Cys-2108, Cys-2102/Cys-2117, Cys-2119/Cys-2130, Cys-2136/Cys-2150, Cys-2144/Cys-2160, and Cys-2162/Cys-2173. 3 EGF-like domains span residues 2056 to 2090, 2091 to 2131, and 2132 to 2174; these read LQPV…RVCT, VADL…WSCR, and ARNP…LQCL. Asn-2107 is a glycosylation site (N-linked (GlcNAc...) asparagine). Residues 2206–2301 form the Link domain; it reads RAGVFHLQAT…SERWDAYCFR (96 aa). Asn-2222, Asn-2261, Asn-2290, Asn-2334, Asn-2347, Asn-2379, Asn-2393, Asn-2400, and Asn-2424 each carry an N-linked (GlcNAc...) asparagine glycan. 2 disulfides stabilise this stretch: Cys-2230/Cys-2299 and Cys-2254/Cys-2275. Residues 2322-2459 form the FAS1 7 domain; the sequence is NGKLLDVLAA…GIIHALASPL (138 aa). Residues 2479–2499 traverse the membrane as a helical segment; sequence GVGAVLAAGALLGLVAGALYL. Over 2500-2570 the chain is Cytoplasmic; it reads RARGKPMGFG…PDTQRILTVK (71 aa).

As to quaternary structure, interacts with CHID1. As to expression, high levels found in spleen, lymph node, liver and placenta. Also expressed in endothelial cells.

The protein localises to the membrane. Functionally, acts as a scavenger receptor for acetylated low density lipoprotein. Binds to both Gram-positive and Gram-negative bacteria and may play a role in defense against bacterial infection. When inhibited in endothelial tube formation assays, there is a marked decrease in cell-cell interactions, suggesting a role in angiogenesis. Involved in the delivery of newly synthesized CHID1/SI-CLP from the biosynthetic compartment to the endosomal/lysosomal system. The protein is Stabilin-1 (STAB1) of Homo sapiens (Human).